The primary structure comprises 601 residues: MSNQLEHIRNFSIIAHIDHGKSTIADRFIHLCGGLTDREMAAQVLDSMDLERERGITIKAQSVTLNYLSDDGQTYQLNFIDTPGHVDFSYEVSRSLAACEGALLVVDASQGVEAQTVANCYTAIEQGLEVLPVLNKIDLPAADPERVVDEIEEIIGIEAHDAVHASAKSGVGIKETLEEIVRKIPAPEGDLDAPLKALIIDSWFDNYLGVVSLVRVIDGKISKKIKMKIMSTKEEYVVDEVGIFTPKRTPRDSLSAGEVGYVIAGIKDIDGAPVGDTITISGNESAPLPGFKPVQPRVFAGLFPISSEDFEDLREALRKLRLNDAALHFEPESSDALGFGFRCGFLGMLHMEIIQERLEREYNLDLITTAPTVIYEVLTKKGDLLSIDNPSSLPDPSLIEEIREPIIQANILVPNEYVGAVMKLCLEKRGVQKDMQYVGNQVSIHYEMPLNEVVLDFFDRLKSTSRGYASMEYDFKRFQADDLVKLEFLVNSEPVDALAIIVHKATAVQRGKALIEKLRKIIPRQMFDVAIQAAIGAKIIGRTNVKALRKNVTAKCYGGDVSRKKKLLQKQKEGKKRMKSIGSVELPQEAFLAVLSTSEED.

The tr-type G domain occupies 6 to 188 (EHIRNFSIIA…EIVRKIPAPE (183 aa)). GTP is bound by residues 18-23 (DHGKST) and 135-138 (NKID).

The protein belongs to the TRAFAC class translation factor GTPase superfamily. Classic translation factor GTPase family. LepA subfamily.

The protein localises to the cell inner membrane. The catalysed reaction is GTP + H2O = GDP + phosphate + H(+). Required for accurate and efficient protein synthesis under certain stress conditions. May act as a fidelity factor of the translation reaction, by catalyzing a one-codon backward translocation of tRNAs on improperly translocated ribosomes. Back-translocation proceeds from a post-translocation (POST) complex to a pre-translocation (PRE) complex, thus giving elongation factor G a second chance to translocate the tRNAs correctly. Binds to ribosomes in a GTP-dependent manner. In Hydrogenovibrio crunogenus (strain DSM 25203 / XCL-2) (Thiomicrospira crunogena), this protein is Elongation factor 4.